A 132-amino-acid polypeptide reads, in one-letter code: MPNPAETTTQVRLDKWLWAARFYKTRSLARDQIEGGKVHYNGQRSKPGKAVEAGALIRVWQGQDEREVRVLQVSEQRKSAPLAQLLYEETEASLKKRAENSEARRFNSQFAPSPERRPDKQERRQLIKVKQY.

One can recognise an S4 RNA-binding domain in the interval 11–73 (VRLDKWLWAA…DEREVRVLQV (63 aa)). Composition is skewed to basic and acidic residues over residues 94–105 (LKKRAENSEARR) and 114–125 (PERRPDKQERRQ). The segment at 94–132 (LKKRAENSEARRFNSQFAPSPERRPDKQERRQLIKVKQY) is disordered.

This sequence belongs to the HSP15 family.

May play an important role in binding of nucleic acid. More specific for RNA. This Aeromonas salmonicida protein is Heat shock protein 15 homolog (hslR).